Consider the following 507-residue polypeptide: Alkyl hydroperoxide reductase subunit F (507 aa).

Position 207 to 222 (207 to 222 (DVLIVGGGPASGSAAI)) interacts with FAD. Cysteine 335 and cysteine 338 are disulfide-bonded. 347 to 361 (DVAVIGGGNSGVEAA) contacts NAD(+). 467–477 (TNVPGIFAAGD) serves as a coordination point for FAD.

Belongs to the class-II pyridine nucleotide-disulfide oxidoreductase family. As to quaternary structure, homodimer. FAD serves as cofactor.

In terms of biological role, serves to protect the cell against DNA damage by alkyl hydroperoxides. It can use either NADH or NADPH as electron donor for direct reduction of redox dyes or of alkyl hydroperoxides when combined with the AhpC protein. The chain is Alkyl hydroperoxide reductase subunit F (ahpF) from Staphylococcus aureus (strain MSSA476).